The primary structure comprises 320 residues: MRQTKTGILLANLGTPDAPTPEAVKRYLKQFLSDRRVVDTSRLLWWPLLRGVILPLRSPRVAKLYASVWMEGGSPLMVYSRQQQQALAQRLPETPVALGMSYGSPSLESAVDELLAEHVDHIVVLPLYPQYSCSTVGAVWDELARILARKRSIPGISFIRDYADNHDYINALANSVRASFAKHGEPDLLLLSYHGIPQRYADEGDDYPQRCRTTTRELASALGMAPEKVMMTFQSRFGREPWLMPYTDETLKMLGEKGVGHIQVMCPGFAADCLETLEEIAEQNREVFLGAGGKKYEYIPALNATPEHIEMMANLVAAYR.

The Fe cation site is built by His-194 and Glu-275.

The protein belongs to the ferrochelatase family. As to quaternary structure, monomer.

The protein localises to the cytoplasm. It catalyses the reaction heme b + 2 H(+) = protoporphyrin IX + Fe(2+). It participates in porphyrin-containing compound metabolism; protoheme biosynthesis; protoheme from protoporphyrin-IX: step 1/1. Catalyzes the ferrous insertion into protoporphyrin IX. The chain is Ferrochelatase from Escherichia coli O9:H4 (strain HS).